The following is a 280-amino-acid chain: F420-dependent methylenetetrahydromethanopterin dehydrogenase (280 aa).

Belongs to the MTD family.

The enzyme catalyses 5,10-methylenetetrahydromethanopterin + oxidized coenzyme F420-(gamma-L-Glu)(n) + 2 H(+) = 5,10-methenyl-5,6,7,8-tetrahydromethanopterin + reduced coenzyme F420-(gamma-L-Glu)(n). It functions in the pathway one-carbon metabolism; methanogenesis from CO(2); 5,10-methylene-5,6,7,8-tetrahydromethanopterin from 5,10-methenyl-5,6,7,8-tetrahydromethanopterin (coenzyme F420 route): step 1/1. Functionally, catalyzes the reversible reduction of methenyl-H(4)MPT(+) to methylene-H(4)MPT. The polypeptide is F420-dependent methylenetetrahydromethanopterin dehydrogenase (Methanosphaerula palustris (strain ATCC BAA-1556 / DSM 19958 / E1-9c)).